Here is a 421-residue protein sequence, read N- to C-terminus: Forkhead box protein fkh-3 (421 aa).

Positions 118–218 (RPPISYVALC…SDADFDFFRK (101 aa)) form a DNA-binding region, fork-head.

It is found in the nucleus. Functionally, transcription factor. Binds to DNA sequence motif 5'-CTGTTTCA-3'. Regulates expression of a class of small RNAs, known as 21U-RNAs, perhaps acting redundantly with fkh-4 and fkh-5. In Caenorhabditis elegans, this protein is Forkhead box protein fkh-3.